The sequence spans 100 residues: MAKVKIKPLSDRVVIKPEPPEEKTESGLYIPDTAKEKPQRGTVIAVGPGRVENGTKIEMSVKEGDKVLYGKYAGTEITIDGEEYLIMRETDILGIIEEEK.

It belongs to the GroES chaperonin family. In terms of assembly, heptamer of 7 subunits arranged in a ring. Interacts with the chaperonin GroEL.

The protein localises to the cytoplasm. In terms of biological role, together with the chaperonin GroEL, plays an essential role in assisting protein folding. The GroEL-GroES system forms a nano-cage that allows encapsulation of the non-native substrate proteins and provides a physical environment optimized to promote and accelerate protein folding. GroES binds to the apical surface of the GroEL ring, thereby capping the opening of the GroEL channel. In Rhodothermus marinus (Rhodothermus obamensis), this protein is Co-chaperonin GroES.